The following is a 558-amino-acid chain: Laccase-10 (558 aa).

Positions 1–22 (MVFPIRILVLFALLAFPACVHG) are cleaved as a signal peptide. 2 Plastocyanin-like domains span residues 30–146 (NVVT…PKLG) and 157–308 (EEVI…YSGT). N76 carries an N-linked (GlcNAc...) asparagine glycan. 2 residues coordinate Cu cation: H80 and H82. Residue N112 is glycosylated (N-linked (GlcNAc...) asparagine). The Cu cation site is built by H125 and H127. N-linked (GlcNAc...) asparagine glycosylation is found at N185, N296, N323, N373, N383, N400, and N441. One can recognise a Plastocyanin-like 3 domain in the interval 408 to 542 (DFPAKPRRVF…KMAFLVENGK (135 aa)). 7 residues coordinate Cu cation: H459, H462, H464, H521, C522, H523, and H527. N-linked (GlcNAc...) asparagine glycosylation occurs at N545.

Belongs to the multicopper oxidase family. It depends on Cu cation as a cofactor. In terms of tissue distribution, ubiquitous, with lower levels in siliques.

Its subcellular location is the secreted. The protein localises to the extracellular space. It localises to the apoplast. The enzyme catalyses 4 hydroquinone + O2 = 4 benzosemiquinone + 2 H2O. Functionally, lignin degradation and detoxification of lignin-derived products. The protein is Laccase-10 (LAC10) of Arabidopsis thaliana (Mouse-ear cress).